Consider the following 269-residue polypeptide: Probable sulfate transport system permease protein cysT (269 aa).

The next 7 helical transmembrane spans lie at 10-30 (SWRITLGYLLFMLILPILALL), 60-80 (MALIASIVNGIFGIFIAWILV), 92-112 (AAIDLPFALPTSVAGLTLATV), 130-150 (VVFTKLGVGVAMIFVSFPFVV), 179-199 (FWKVIFPSLIPSLLTGIALAF), 208-228 (SVVIIASNIPFKDLTAPVLIF), and 240-260 (TVIGTVILSISLFILVGINII). Residues 54 to 255 (YSITLSMALI…ILSISLFILV (202 aa)) enclose the ABC transmembrane type-1 domain.

Belongs to the binding-protein-dependent transport system permease family. CysTW subfamily.

It is found in the plastid. Its subcellular location is the chloroplast membrane. Its function is as follows. Part of the ABC transporter complex cysAWTP (TC 3.A.1.6.1) involved in sulfate/thiosulfate import. Probably responsible for the translocation of the substrate across the membrane. This Mesostigma viride (Green alga) protein is Probable sulfate transport system permease protein cysT (cysT).